Reading from the N-terminus, the 285-residue chain is Phosphatidate cytidylyltransferase (285 aa).

The next 8 membrane-spanning stretches (helical) occupy residues 10–30, 56–76, 93–113, 121–141, 151–171, 190–210, 213–233, and 264–284; these read FVLIPVVIAALFLLPPVGFAI, VWLAVLCGLLLALMLFLLPEY, LGWWIVALLLVLFYPGSAAIW, LIFGVLTIVPFFWGMLALRAW, AIWLLYVMILVWGADSGAYMF, WQGFIGGLATAAVISWGYGMW, LDVAPVTLLICSIVAALASVL, and IDSLTAAVPVFACLLLLVFRT.

This sequence belongs to the CDS family.

It localises to the cell inner membrane. The catalysed reaction is a 1,2-diacyl-sn-glycero-3-phosphate + CTP + H(+) = a CDP-1,2-diacyl-sn-glycerol + diphosphate. It participates in phospholipid metabolism; CDP-diacylglycerol biosynthesis; CDP-diacylglycerol from sn-glycerol 3-phosphate: step 3/3. This is Phosphatidate cytidylyltransferase (cdsA) from Escherichia coli O157:H7.